Here is a 616-residue protein sequence, read N- to C-terminus: Chaperone protein HscA (616 aa).

It belongs to the heat shock protein 70 family.

Its function is as follows. Chaperone involved in the maturation of iron-sulfur cluster-containing proteins. Has a low intrinsic ATPase activity which is markedly stimulated by HscB. Involved in the maturation of IscU. This is Chaperone protein HscA from Citrobacter koseri (strain ATCC BAA-895 / CDC 4225-83 / SGSC4696).